Reading from the N-terminus, the 84-residue chain is Dolichol phosphate-mannose biosynthesis regulatory protein (84 aa).

Transmembrane regions (helical) follow at residues F11–L31 and Y49–I69.

Belongs to the DPM2 family. In terms of assembly, component of the dolichol-phosphate mannose (DPM) synthase complex composed of DPM1, DPM2 and DPM3; in the complex interacts directly with DPM3. Component of the glycosylphosphatidylinositol-N-acetylglucosaminyltransferase (GPI-GnT) complex composed at least by PIGA, PIGC, PIGH, PIGP, PIGQ, PIGY and DPM2. Interacts with PIGA, PIGC and PIGQ.

It is found in the endoplasmic reticulum membrane. It functions in the pathway protein modification; protein glycosylation. Functionally, regulates the biosynthesis of dolichol phosphate-mannose. Regulatory subunit of the dolichol-phosphate mannose (DPM) synthase complex; essential for the ER localization and stable expression of DPM1. Part of the glycosylphosphatidylinositol-N-acetylglucosaminyltransferase (GPI-GnT) complex that catalyzes the transfer of N-acetylglucosamine from UDP-N-acetylglucosamine to phosphatidylinositol and participates in the first step of GPI biosynthesis. May act by regulating the GPI-GNT complex. This is Dolichol phosphate-mannose biosynthesis regulatory protein from Mus musculus (Mouse).